We begin with the raw amino-acid sequence, 234 residues long: ATP synthase subunit a 1 (234 aa).

5 helical membrane passes run 20-40, 76-96, 105-125, 162-184, and 195-215; these read ETVV…ILLT, LLPL…LGVI, DLSV…AYGV, LFGN…GFLA, and EALV…AGAM.

The protein belongs to the ATPase A chain family. As to quaternary structure, F-type ATPases have 2 components, CF(1) - the catalytic core - and CF(0) - the membrane proton channel. CF(1) has five subunits: alpha(3), beta(3), gamma(1), delta(1), epsilon(1). CF(0) has three main subunits: a(1), b(2) and c(9-12). The alpha and beta chains form an alternating ring which encloses part of the gamma chain. CF(1) is attached to CF(0) by a central stalk formed by the gamma and epsilon chains, while a peripheral stalk is formed by the delta and b chains.

It is found in the cell inner membrane. Its function is as follows. Key component of the proton channel; it plays a direct role in the translocation of protons across the membrane. The sequence is that of ATP synthase subunit a 1 from Hahella chejuensis (strain KCTC 2396).